The primary structure comprises 114 residues: MAEDTIFSKIIRREIPAAIVYEDDLCLAFKDVNPQAPVHVLLIPKKPLPQLSAATPEDHALLGHLLLKAKEVAADLGIGDQFRLVINNGAEVGQTVFHLHLHILGGRPFSWPPG.

The region spanning 6-114 is the HIT domain; sequence IFSKIIRREI…GGRPFSWPPG (109 aa). The short motif at 98 to 102 is the Histidine triad motif element; sequence HLHLH.

This is an uncharacterized protein from Synechocystis sp. (strain ATCC 27184 / PCC 6803 / Kazusa).